The sequence spans 618 residues: Beta-glucosidase C (618 aa).

The N-terminal stretch at 1–19 is a signal peptide; sequence MRVDSTVLALVALATDCLG. 5 N-linked (GlcNAc...) asparagine glycosylation sites follow: asparagine 40, asparagine 82, asparagine 104, asparagine 211, and asparagine 263. Residue aspartate 330 is part of the active site. 6 N-linked (GlcNAc...) asparagine glycosylation sites follow: asparagine 417, asparagine 448, asparagine 477, asparagine 482, asparagine 502, and asparagine 517.

This sequence belongs to the glycosyl hydrolase 3 family.

Its subcellular location is the secreted. The catalysed reaction is Hydrolysis of terminal, non-reducing beta-D-glucosyl residues with release of beta-D-glucose.. It functions in the pathway glycan metabolism; cellulose degradation. Functionally, beta-glucosidases are one of a number of cellulolytic enzymes involved in the degradation of cellulosic biomass. Catalyzes the last step releasing glucose from the inhibitory cellobiose. This is Beta-glucosidase C (bglC) from Emericella nidulans (strain FGSC A4 / ATCC 38163 / CBS 112.46 / NRRL 194 / M139) (Aspergillus nidulans).